A 93-amino-acid polypeptide reads, in one-letter code: Large ribosomal subunit protein uL23 (93 aa).

Belongs to the universal ribosomal protein uL23 family. Part of the 50S ribosomal subunit. Contacts protein L29, and trigger factor when it is bound to the ribosome.

Functionally, one of the early assembly proteins it binds 23S rRNA. One of the proteins that surrounds the polypeptide exit tunnel on the outside of the ribosome. Forms the main docking site for trigger factor binding to the ribosome. The sequence is that of Large ribosomal subunit protein uL23 from Nautilia profundicola (strain ATCC BAA-1463 / DSM 18972 / AmH).